We begin with the raw amino-acid sequence, 1089 residues long: Electroneutral sodium bicarbonate exchanger 1 (1089 aa).

The Extracellular portion of the chain corresponds to M1 to C476. Residues L55–L90 are disordered. A compositionally biased stretch (basic residues) spans Q58 to R76. Residues L477 to L497 traverse the membrane as a helical segment. The Cytoplasmic portion of the chain corresponds to L498–R505. Residues I506–A526 traverse the membrane as a helical segment. At G527–L563 the chain is on the extracellular side. The helical transmembrane segment at I564–V584 threads the bilayer. Over C585–E593 the chain is Cytoplasmic. The chain crosses the membrane as a helical span at residues A594–L614. The Extracellular portion of the chain corresponds to A615–H685. Intrachain disulfides connect C634/C682 and C636/C670. N-linked (GlcNAc) asparagine glycosylation is present at N644. The chain crosses the membrane as a helical span at residues G686 to V706. The Cytoplasmic segment spans residues S707–D729. Residues F730–S750 form a helical membrane-spanning segment. The Extracellular portion of the chain corresponds to P751–N776. Residues P777–M797 form a helical membrane-spanning segment. The Cytoplasmic segment spans residues D798–D822. The helical transmembrane segment at L823–A843 threads the bilayer. Residues A844–T879 lie on the Extracellular side of the membrane. The helical transmembrane segment at G880–I900 threads the bilayer. At P901–M902 the chain is on the cytoplasmic side. The helical transmembrane segment at P903–F923 threads the bilayer. Over D924–C960 the chain is Extracellular. The helical transmembrane segment at L961–L981 threads the bilayer. Topologically, residues A982–N1089 are cytoplasmic.

It belongs to the anion exchanger (TC 2.A.31) family. Homodimer. Expressed in the hippocampal neurons (at protein level). Highly expressed in brain with lower levels in lung, kidney and heart. In the kidney, there is high expression in the inner medulla, localized to the inner medullary collecting duct. In the brain, there seems to be three transcripts each having a different expression pattern. The smaller 3kb transcript has highest expression levels in the thalamus and the largest 9.5kb transcript has highest levels in the substantia nigra. The middle transcript of 4.4kb, which is also the main transcript in kidney, is highly expressed in thalamus. Hence, the highest levels are observed in the thalamus, amygdala and caudate nucleus and very low expression was seen in the corpus callosum.

Its subcellular location is the cell membrane. The protein localises to the apical cell membrane. The protein resides in the basolateral cell membrane. It localises to the cytoplasmic vesicle. It is found in the secretory vesicle. Its subcellular location is the synaptic vesicle membrane. It catalyses the reaction 2 hydrogencarbonate(out) + chloride(in) + Na(+)(out) = 2 hydrogencarbonate(in) + chloride(out) + Na(+)(in). Its function is as follows. Mediates electroneutral sodium- and carbonate-dependent chloride-HCO3(-) exchange with a Na(+):HCO3(-) stoichiometry of 2:1. Plays a major role in pH regulation in neurons. Mediates sodium reabsorption in the renal cortical collecting ducts. The sequence is that of Electroneutral sodium bicarbonate exchanger 1 from Mus musculus (Mouse).